Reading from the N-terminus, the 217-residue chain is Adenylate kinase (217 aa).

An ATP-binding site is contributed by 10–15 (GAGKGT). The segment at 30 to 59 (STGDIFRKNISDKTPLGIEAKEYLDKGQLV) is NMP. Residues T31, R36, 57 to 59 (QLV), 85 to 88 (GFPR), and Q92 each bind AMP. Positions 126–163 (GRRICPSCGASYHVKFNPPKLKDKCDICNNDIIQRKDD) are LID. R127 lines the ATP pocket. Positions 130 and 133 each coordinate Zn(2+). 136 to 137 (SY) provides a ligand contact to ATP. Positions 150 and 153 each coordinate Zn(2+). 2 residues coordinate AMP: R160 and R171. G199 serves as a coordination point for ATP.

Belongs to the adenylate kinase family. As to quaternary structure, monomer.

The protein resides in the cytoplasm. It carries out the reaction AMP + ATP = 2 ADP. The protein operates within purine metabolism; AMP biosynthesis via salvage pathway; AMP from ADP: step 1/1. In terms of biological role, catalyzes the reversible transfer of the terminal phosphate group between ATP and AMP. Plays an important role in cellular energy homeostasis and in adenine nucleotide metabolism. The protein is Adenylate kinase of Clostridium kluyveri (strain NBRC 12016).